The primary structure comprises 282 residues: Inositol oxygenase (282 aa).

The tract at residues 1 to 25 (MKDPDPSQVYRPDMDPEAAKDKGSF) is disordered. Residues 12-24 (PDMDPEAAKDKGS) are compositionally biased toward basic and acidic residues. R26 contacts substrate. A Phosphoserine modification is found at S30. Residue 82-84 (DES) participates in substrate binding. Residues H95, H120, and D121 each coordinate Fe cation. Residues K124 and 138–139 (GD) contribute to the substrate site. Residues H191, H217, and D250 each coordinate Fe cation. Residue 217–218 (HS) coordinates substrate.

Belongs to the myo-inositol oxygenase family. The cofactor is Fe cation. In terms of processing, the N-terminus is blocked. In terms of tissue distribution, kidney specific.

It localises to the cytoplasm. It carries out the reaction myo-inositol + O2 = D-glucuronate + H2O + H(+). It functions in the pathway polyol metabolism; myo-inositol degradation into D-glucuronate; D-glucuronate from myo-inositol: step 1/1. This Sus scrofa (Pig) protein is Inositol oxygenase (MIOX).